A 119-amino-acid chain; its full sequence is Large ribosomal subunit protein bL20 (119 aa).

This sequence belongs to the bacterial ribosomal protein bL20 family.

Binds directly to 23S ribosomal RNA and is necessary for the in vitro assembly process of the 50S ribosomal subunit. It is not involved in the protein synthesizing functions of that subunit. In Acidovorax sp. (strain JS42), this protein is Large ribosomal subunit protein bL20.